Here is a 580-residue protein sequence, read N- to C-terminus: Protein O-linked-mannose beta-1,4-N-acetylglucosaminyltransferase 2 (580 aa).

The Cytoplasmic segment spans residues 1–4 (MHLS). A helical; Signal-anchor for type II membrane protein transmembrane segment spans residues 5–25 (AVFNALLVSVLAAVLWKHVRL). Residues 26–580 (REHAATLEEE…PFADVLVCST (555 aa)) lie on the Lumenal side of the membrane. N-linked (GlcNAc...) asparagine glycosylation is found at Asn-99 and Asn-276. A Fibronectin type-III domain is found at 488–580 (ARCQASVQGA…PFADVLVCST (93 aa)).

It belongs to the glycosyltransferase 61 family. Mainly expressed in the central nervous system.

Its subcellular location is the endoplasmic reticulum membrane. The enzyme catalyses 3-O-(alpha-D-mannosyl)-L-threonyl-[protein] + UDP-N-acetyl-alpha-D-glucosamine = 3-O-(N-acetyl-beta-D-glucosaminyl-(1-&gt;4)-alpha-D-mannosyl)-L-threonyl-[protein] + UDP + H(+). It participates in protein modification; protein glycosylation. Functionally, O-linked mannose beta-1,4-N-acetylglucosaminyltransferase that transfers UDP-N-acetyl-D-glucosamine to the 4-position of the mannose to generate N-acetyl-D-glucosamine-beta-1,4-O-D-mannosylprotein. Involved in the biosynthesis of the phosphorylated O-mannosyl trisaccharide (N-acetylgalactosamine-beta-3-N-acetylglucosamine-beta-4-(phosphate-6-)mannose), a carbohydrate structure present in alpha-dystroglycan (DAG1), which is required for binding laminin G-like domain-containing extracellular proteins with high affinity. This chain is Protein O-linked-mannose beta-1,4-N-acetylglucosaminyltransferase 2 (Pomgnt2), found in Mus musculus (Mouse).